The primary structure comprises 205 residues: Retron Vc95 putative HNH endonuclease (205 aa).

Putative HNH endonuclease component of antiviral defense system retron Vc95, composed of a non-coding RNA (ncRNA), a reverse transcriptase (RT), a probable ATP-binding protein and this protein. Expression of retron Vc95 confers protection against bacteriophages T2, T4 and T6. At multiplicity of infection (MOI) of 0.02 cultures slow growth when infected with T4 but do not collapse, at MOI 2 cultures enter growth stasis. This is Retron Vc95 putative HNH endonuclease from Vibrio cholerae serotype O1 biovar El Tor.